The following is a 467-amino-acid chain: uncharacterized protein (467 aa).

Lys-290 carries the N6-(pyridoxal phosphate)lysine modification.

This sequence belongs to the class-III pyridoxal-phosphate-dependent aminotransferase family. The cofactor is pyridoxal 5'-phosphate.

This is an uncharacterized protein from Sinorhizobium fredii (strain NBRC 101917 / NGR234).